The chain runs to 223 residues: Sigma non-opioid intracellular receptor 1 (223 aa).

Residues M1 to W9 lie on the Lumenal side of the membrane. Residues P2–R8 are targeting to endoplasmic reticulum-associated lipid droplets. Residues A10–L30 form a helical membrane-spanning segment. Residues G31–P223 lie on the Cytoplasmic side of the membrane. The tract at residues S99–L106 is important for ligand-binding. The C-terminal hydrophobic region stretch occupies residues V177–P223.

This sequence belongs to the ERG2 family. As to quaternary structure, homotrimer. Interacts with KCNA2; cocaine consumption leads to increased interaction. Forms a ternary complex with ANK2 and ITPR3. The complex is disrupted by agonists. Interacts with KCNA4. Interacts with RNF112 in an oxidative stress-regulated manner. Expressed in ependymocytes and neurons throughout the CNS from the olfactory bulb to the spinal cord. Expressed by progenitor, mature and satellite oligodendrocytes and by Schwann cells (at protein level). Expressed in liver, intestine, kidney, brain, lung and heart. Expressed by retinal cells.

It is found in the nucleus inner membrane. The protein resides in the nucleus outer membrane. It localises to the nucleus envelope. The protein localises to the cytoplasmic vesicle. Its subcellular location is the endoplasmic reticulum membrane. It is found in the membrane. The protein resides in the lipid droplet. It localises to the cell junction. The protein localises to the cell membrane. Its subcellular location is the cell projection. It is found in the growth cone. The protein resides in the postsynaptic density membrane. Its function is as follows. Functions in lipid transport from the endoplasmic reticulum and is involved in a wide array of cellular functions probably through regulation of the biogenesis of lipid microdomains at the plasma membrane. Involved in the regulation of different receptors it plays a role in BDNF signaling and EGF signaling. Also regulates ion channels like the potassium channel and could modulate neurotransmitter release. Plays a role in calcium signaling through modulation together with ANK2 of the ITP3R-dependent calcium efflux at the endoplasmic reticulum. Plays a role in several other cell functions including proliferation, survival and death. Originally identified for its ability to bind various psychoactive drugs it is involved in learning processes, memory and mood alteration. Necessary for proper mitochondrial axonal transport in motor neurons, in particular the retrograde movement of mitochondria. Plays a role in protecting cells against oxidative stress-induced cell death via its interaction with RNF112. The chain is Sigma non-opioid intracellular receptor 1 (Sigmar1) from Rattus norvegicus (Rat).